Reading from the N-terminus, the 307-residue chain is tRNA dimethylallyltransferase (307 aa).

ATP is bound at residue 8 to 15 (GPTGSGKS). 10–15 (TGSGKS) contacts substrate. Residues 33-36 (DSLQ) form an interaction with substrate tRNA region.

It belongs to the IPP transferase family. In terms of assembly, monomer. It depends on Mg(2+) as a cofactor.

The catalysed reaction is adenosine(37) in tRNA + dimethylallyl diphosphate = N(6)-dimethylallyladenosine(37) in tRNA + diphosphate. In terms of biological role, catalyzes the transfer of a dimethylallyl group onto the adenine at position 37 in tRNAs that read codons beginning with uridine, leading to the formation of N6-(dimethylallyl)adenosine (i(6)A). The sequence is that of tRNA dimethylallyltransferase from Solibacter usitatus (strain Ellin6076).